The following is an 892-amino-acid chain: Alanine--tRNA ligase (892 aa).

Histidine 578, histidine 582, cysteine 681, and histidine 685 together coordinate Zn(2+).

It belongs to the class-II aminoacyl-tRNA synthetase family. Zn(2+) is required as a cofactor.

It localises to the cytoplasm. It catalyses the reaction tRNA(Ala) + L-alanine + ATP = L-alanyl-tRNA(Ala) + AMP + diphosphate. Catalyzes the attachment of alanine to tRNA(Ala) in a two-step reaction: alanine is first activated by ATP to form Ala-AMP and then transferred to the acceptor end of tRNA(Ala). Also edits incorrectly charged Ser-tRNA(Ala) and Gly-tRNA(Ala) via its editing domain. This is Alanine--tRNA ligase from Cutibacterium acnes (strain DSM 16379 / KPA171202) (Propionibacterium acnes).